The following is a 152-amino-acid chain: 6,7-dimethyl-8-ribityllumazine synthase (152 aa).

Residues phenylalanine 21, 55–57 (AFE), and 79–81 (CVI) contribute to the 5-amino-6-(D-ribitylamino)uracil site. 84–85 (AT) lines the (2S)-2-hydroxy-3-oxobutyl phosphate pocket. Histidine 87 (proton donor) is an active-site residue. Phenylalanine 112 contacts 5-amino-6-(D-ribitylamino)uracil. Arginine 126 contributes to the (2S)-2-hydroxy-3-oxobutyl phosphate binding site.

This sequence belongs to the DMRL synthase family. In terms of assembly, forms an icosahedral capsid composed of 60 subunits, arranged as a dodecamer of pentamers.

It carries out the reaction (2S)-2-hydroxy-3-oxobutyl phosphate + 5-amino-6-(D-ribitylamino)uracil = 6,7-dimethyl-8-(1-D-ribityl)lumazine + phosphate + 2 H2O + H(+). It functions in the pathway cofactor biosynthesis; riboflavin biosynthesis; riboflavin from 2-hydroxy-3-oxobutyl phosphate and 5-amino-6-(D-ribitylamino)uracil: step 1/2. Catalyzes the formation of 6,7-dimethyl-8-ribityllumazine by condensation of 5-amino-6-(D-ribitylamino)uracil with 3,4-dihydroxy-2-butanone 4-phosphate. This is the penultimate step in the biosynthesis of riboflavin. This Staphylococcus haemolyticus (strain JCSC1435) protein is 6,7-dimethyl-8-ribityllumazine synthase.